We begin with the raw amino-acid sequence, 488 residues long: Altronate oxidoreductase (488 aa).

Residue 18–29 participates in NAD(+) binding; it reads VIQFGEGNFLRA.

The protein belongs to the mannitol dehydrogenase family. UxaB subfamily.

It catalyses the reaction D-altronate + NAD(+) = keto-D-tagaturonate + NADH + H(+). The protein operates within carbohydrate metabolism; pentose and glucuronate interconversion. This is Altronate oxidoreductase from Pectobacterium atrosepticum (strain SCRI 1043 / ATCC BAA-672) (Erwinia carotovora subsp. atroseptica).